We begin with the raw amino-acid sequence, 475 residues long: Aspartyl/glutamyl-tRNA(Asn/Gln) amidotransferase subunit B (475 aa).

It belongs to the GatB/GatE family. GatB subfamily. As to quaternary structure, heterotrimer of A, B and C subunits.

It catalyses the reaction L-glutamyl-tRNA(Gln) + L-glutamine + ATP + H2O = L-glutaminyl-tRNA(Gln) + L-glutamate + ADP + phosphate + H(+). The catalysed reaction is L-aspartyl-tRNA(Asn) + L-glutamine + ATP + H2O = L-asparaginyl-tRNA(Asn) + L-glutamate + ADP + phosphate + 2 H(+). Allows the formation of correctly charged Asn-tRNA(Asn) or Gln-tRNA(Gln) through the transamidation of misacylated Asp-tRNA(Asn) or Glu-tRNA(Gln) in organisms which lack either or both of asparaginyl-tRNA or glutaminyl-tRNA synthetases. The reaction takes place in the presence of glutamine and ATP through an activated phospho-Asp-tRNA(Asn) or phospho-Glu-tRNA(Gln). This is Aspartyl/glutamyl-tRNA(Asn/Gln) amidotransferase subunit B from Staphylococcus aureus (strain bovine RF122 / ET3-1).